A 364-amino-acid chain; its full sequence is Flagellar P-ring protein (364 aa).

Positions 1–21 are cleaved as a signal peptide; sequence MNVFKVFCLMVLLGWQLPAMA.

This sequence belongs to the FlgI family. As to quaternary structure, the basal body constitutes a major portion of the flagellar organelle and consists of four rings (L,P,S, and M) mounted on a central rod.

The protein resides in the periplasm. It localises to the bacterial flagellum basal body. Functionally, assembles around the rod to form the L-ring and probably protects the motor/basal body from shearing forces during rotation. The sequence is that of Flagellar P-ring protein from Pseudoalteromonas translucida (strain TAC 125).